Reading from the N-terminus, the 71-residue chain is Small ribosomal subunit protein bS21 (71 aa).

Residues 50–59 are compositionally biased toward basic residues; that stretch reads AAAVKRHAKK. A disordered region spans residues 50 to 71; that stretch reads AAAVKRHAKKVQREQRRAVRLY. Positions 60-71 are enriched in basic and acidic residues; it reads VQREQRRAVRLY.

It belongs to the bacterial ribosomal protein bS21 family.

The chain is Small ribosomal subunit protein bS21 from Pseudomonas fluorescens (strain ATCC BAA-477 / NRRL B-23932 / Pf-5).